The primary structure comprises 68 residues: Small integral membrane protein 45 (68 aa).

The chain crosses the membrane as a helical span at residues 7-27 (WFVPVYLVISVLILVGFGACI).

As to expression, highly expressed in brain.

It is found in the nucleus. Its subcellular location is the cytoplasm. The protein localises to the membrane. Functionally, plays a role in the regulation of neuron maturation. This is Small integral membrane protein 45 from Homo sapiens (Human).